Consider the following 69-residue polypeptide: Putative membrane protein insertion efficiency factor (69 aa).

The protein belongs to the UPF0161 family.

The protein resides in the cell inner membrane. Its function is as follows. Could be involved in insertion of integral membrane proteins into the membrane. This chain is Putative membrane protein insertion efficiency factor, found in Novosphingobium aromaticivorans (strain ATCC 700278 / DSM 12444 / CCUG 56034 / CIP 105152 / NBRC 16084 / F199).